Here is a 110-residue protein sequence, read N- to C-terminus: MVVRSILLFVLAAVAEIGGAWLVWQGVREQRGWLWAGLGVIALGVYGFFATLQPDAHFGRVLAAYGGVFVAGSLAWGMALDGFRPDRWDVIGALGCMAGVAVIMYAPRGH.

4 helical membrane-spanning segments follow: residues 6–26, 32–52, 61–81, and 90–110; these read ILLFVLAAVAEIGGAWLVWQG, GWLWAGLGVIALGVYGFFATL, VLAAYGGVFVAGSLAWGMALD, and VIGALGCMAGVAVIMYAPRGH.

The protein belongs to the UPF0060 family.

It is found in the cell membrane. This Mycobacterium tuberculosis (strain CDC 1551 / Oshkosh) protein is UPF0060 membrane protein MT2717.